Reading from the N-terminus, the 150-residue chain is Sulfur-rich protein, serovar D (150 aa).

2 consecutive transmembrane segments (helical) span residues 41–61 (VGLV…LVSA) and 67–87 (AIYL…VGIL).

It localises to the membrane. This chain is Sulfur-rich protein, serovar D (srp), found in Chlamydia trachomatis serovar D (strain ATCC VR-885 / DSM 19411 / UW-3/Cx).